A 386-amino-acid polypeptide reads, in one-letter code: ATP synthase gamma chain 2, chloroplastic (386 aa).

Residues 1 to 22 (MTGSISTSWLLSSPSNSNSASS) are disordered. The N-terminal 60 residues, 1–60 (MTGSISTSWLLSSPSNSNSASSSESYSFIATLKPVRYYPFQSLTPNRISSRSPLPSIQIR), are a transit peptide targeting the chloroplast. The active site involves C149. A disulfide bond links C260 and C266.

Belongs to the ATPase gamma chain family. F-type ATPases have 2 components, CF(1) - the catalytic core - and CF(0) - the membrane proton channel. CF(1) has five subunits: alpha(3), beta(3), gamma(1), delta(1), epsilon(1). CF(0) has four main subunits: a, b, b' and c.

It localises to the plastid. Its subcellular location is the chloroplast thylakoid membrane. Functionally, produces ATP from ADP in the presence of a proton gradient across the membrane. The gamma chain is believed to be important in regulating ATPase activity and the flow of protons through the CF(0) complex. The chain is ATP synthase gamma chain 2, chloroplastic (ATPC2) from Arabidopsis thaliana (Mouse-ear cress).